The sequence spans 493 residues: uncharacterized protein (493 aa).

The disordered stretch occupies residues 96 to 124 (TTVAKASPPPAKPASAPTEITWKGSPQFT).

This is an uncharacterized protein from Caulobacter vibrioides (strain ATCC 19089 / CIP 103742 / CB 15) (Caulobacter crescentus).